A 465-amino-acid chain; its full sequence is Gamma-aminobutyric acid receptor subunit alpha-6 (465 aa).

The N-terminal stretch at Met-1–Gly-19 is a signal peptide. Residues Gly-20–Phe-243 lie on the Extracellular side of the membrane. The N-linked (GlcNAc...) asparagine glycan is linked to Asn-31. Arg-84 is a 4-aminobutanoate binding site. N-linked (GlcNAc...) asparagine glycosylation is found at Asn-128 and Asn-141. Position 147 (Thr-147) interacts with 4-aminobutanoate. Cys-156 and Cys-170 are disulfide-bonded. Residues Met-244–Ile-264 form a helical membrane-spanning segment. Residues Asn-265–Pro-270 lie on the Cytoplasmic side of the membrane. A helical membrane pass occupies residues Ala-271–Ala-290. Residues Arg-291 to Asp-304 are Extracellular-facing. Residues Trp-305–Asn-325 form a helical membrane-spanning segment. Residues Tyr-326–Arg-424 lie on the Cytoplasmic side of the membrane. A disordered region spans residues Asn-392–Gly-415. Positions Ser-401 to Val-413 are enriched in pro residues. Residues Ile-425 to Lys-445 traverse the membrane as a helical segment. The Extracellular segment spans residues Asp-446–Asn-465.

This sequence belongs to the ligand-gated ion channel (TC 1.A.9) family. Gamma-aminobutyric acid receptor (TC 1.A.9.5) subfamily. GABRA6 sub-subfamily. Heteropentamer, formed by a combination of alpha (GABRA1-6), beta (GABRB1-3), gamma (GABRG1-3), delta (GABRD), epsilon (GABRE), rho (GABRR1-3), pi (GABRP) and theta (GABRQ) chains, each subunit exhibiting distinct physiological and pharmacological properties. Expressed in brain, in cerebellar granule cells.

The protein localises to the postsynaptic cell membrane. It localises to the cell membrane. It catalyses the reaction chloride(in) = chloride(out). Its function is as follows. Alpha subunit of the heteropentameric ligand-gated chloride channel gated by gamma-aminobutyric acid (GABA), a major inhibitory neurotransmitter in the brain. GABA-gated chloride channels, also named GABA(A) receptors (GABAAR), consist of five subunits arranged around a central pore and contain GABA active binding site(s) located at the alpha and beta subunit interface(s). When activated by GABA, GABAARs selectively allow the flow of chloride anions across the cell membrane down their electrochemical gradient. The polypeptide is Gamma-aminobutyric acid receptor subunit alpha-6 (GABRA6) (Gallus gallus (Chicken)).